The sequence spans 312 residues: tRNA pseudouridine synthase B (312 aa).

Catalysis depends on Asp-49, which acts as the Nucleophile.

This sequence belongs to the pseudouridine synthase TruB family. Type 1 subfamily.

The enzyme catalyses uridine(55) in tRNA = pseudouridine(55) in tRNA. Responsible for synthesis of pseudouridine from uracil-55 in the psi GC loop of transfer RNAs. The chain is tRNA pseudouridine synthase B from Chelativorans sp. (strain BNC1).